A 178-amino-acid chain; its full sequence is Large ribosomal subunit protein uL13m (178 aa).

It belongs to the universal ribosomal protein uL13 family. As to quaternary structure, component of the mitochondrial ribosome large subunit (39S) which comprises a 16S rRNA and about 50 distinct proteins.

The protein resides in the mitochondrion. The sequence is that of Large ribosomal subunit protein uL13m (mRpL13) from Drosophila melanogaster (Fruit fly).